We begin with the raw amino-acid sequence, 617 residues long: KIF-binding protein (617 aa).

The disordered stretch occupies residues 48 to 83; that stretch reads ALLGPAPEDDDERAADDGPVDQALGAGEPRDAEGPG. Ser-174 is modified (phosphoserine).

It belongs to the KIF-binding protein family. As to quaternary structure, interacts with KIF1B; positively regulates KIF1B microtubule motor activity. Interacts with STMN2.

It localises to the cytoplasm. Its subcellular location is the cytoskeleton. Its function is as follows. Activator of KIF1B plus-end-directed microtubule motor activity. Required for organization of axonal microtubules, and axonal outgrowth and maintenance during peripheral and central nervous system development. This is KIF-binding protein (Kifbp) from Rattus norvegicus (Rat).